A 325-amino-acid polypeptide reads, in one-letter code: Protein ORANGE-ORANGE, chloroplastic (325 aa).

The transit peptide at 1 to 54 directs the protein to the chloroplast; it reads MDRVLVASYPINHLIRPHSFRIDYCWSTCFTSRLNSGKERQKLSSRWRWRSMAS. Positions 53–71 are enriched in low complexity; it reads ASDSTDSSSSSSFAPSVES. A disordered region spans residues 53-77; sequence ASDSTDSSSSSSFAPSVESDPSDKT. 2 consecutive transmembrane segments (helical) span residues 164–184 and 217–237; these read LYYVTCYSLIAGIILFGGLLA and IVASFSGGAVGVISALMVVEV. Positions 226 to 317 are CR-type-like; it reads VGVISALMVV…CTGMAMASEH (92 aa). A CXXCXGXG motif repeat occupies 248–255; it reads CKYCLGTG. The stretch at 259–266 is one CXXCXXXG motif repeat; it reads CARCSNTG. Residues 292–299 form a CXXCXGXG motif repeat; it reads CQNCSGSG. A CXXCXXXG motif repeat occupies 303–310; sequence CPTCLCTG.

This sequence belongs to the orange-like family.

The protein resides in the plastid. It is found in the chloroplast membrane. In terms of biological role, triggers accumulation of carotenoids, mainly beta-carotene, in fruit flesh. This chain is Protein ORANGE-ORANGE, chloroplastic, found in Cucumis melo (Muskmelon).